We begin with the raw amino-acid sequence, 490 residues long: MSITSVSLYVYLICAGGHAKQVIDIFLDNGIEIKGIFDDNKTGQFYRGTQIIGVISDITKYQSEPFFCTVGDNQIREKISQTVGNVEWINCISKLAYISPSVVIGKGNYVGTHSKILADSQLGDFNIVNEGATLTHDNIIGDFNHIAPNVSVGGRVKIGNFNLIGTNSTVNPDILISNNIIIGSGATVVKSLVDPGIYIGTPCKKIIKNISDKCTCFPDNKPLYNEYTEDKSMENTENNKQKIPCFVLIYDQVDIIKKCLSFFTKYNSRLDIIVIENFSQNTNETIKPYVMNLLNKKKIWKYYLFENNIMNNAYHMALQHAIKTYLDPKKYPYTLITDGDLTIDNEDWIEEQINIMESNKNIYVSSCSLDTSNLPTETFPEATSWTKTGIDRGNYIEDNTGIFSLLLKTVDVIDLMVFLDSKNLRFLDSLINHYCYNYKYKIWARTKKSKAYHLTWDLYKDLDHPYTKMKRENIYLWSQNLTCKFDLFEN.

A signal peptide spans 1-19 (MSITSVSLYVYLICAGGHA).

It belongs to the mimivirus L137 family.

This is an uncharacterized protein from Acanthamoeba polyphaga (Amoeba).